A 342-amino-acid polypeptide reads, in one-letter code: Uroporphyrinogen decarboxylase (342 aa).

Residues 26–30 (RQAGR), Asp76, Tyr150, Ser205, and His321 contribute to the substrate site.

It belongs to the uroporphyrinogen decarboxylase family. In terms of assembly, homodimer.

The protein resides in the cytoplasm. The catalysed reaction is uroporphyrinogen III + 4 H(+) = coproporphyrinogen III + 4 CO2. It functions in the pathway porphyrin-containing compound metabolism; protoporphyrin-IX biosynthesis; coproporphyrinogen-III from 5-aminolevulinate: step 4/4. In terms of biological role, catalyzes the decarboxylation of four acetate groups of uroporphyrinogen-III to yield coproporphyrinogen-III. The polypeptide is Uroporphyrinogen decarboxylase (Sphingopyxis alaskensis (strain DSM 13593 / LMG 18877 / RB2256) (Sphingomonas alaskensis)).